A 166-amino-acid polypeptide reads, in one-letter code: FMN reductase (NADH) RutF (166 aa).

The protein belongs to the non-flavoprotein flavin reductase family. RutF subfamily.

It carries out the reaction FMNH2 + NAD(+) = FMN + NADH + 2 H(+). Its function is as follows. Catalyzes the reduction of FMN to FMNH2 which is used to reduce pyrimidine by RutA via the Rut pathway. The chain is FMN reductase (NADH) RutF from Cronobacter sakazakii (strain ATCC BAA-894) (Enterobacter sakazakii).